The chain runs to 454 residues: tRNA modification GTPase MnmE (454 aa).

The (6S)-5-formyl-5,6,7,8-tetrahydrofolate site is built by Arg26, Glu84, and Lys123. Residues 219–378 form the TrmE-type G domain; sequence GLQVVIAGKP…LVDAITAHAG (160 aa). Residue Asn229 coordinates K(+). GTP-binding positions include 229–234, 248–254, and 273–276; these read NAGKSS, TDIAGTT, and DTAG. Ser233 lines the Mg(2+) pocket. K(+) contacts are provided by Thr248, Ile250, and Thr253. Residue Thr254 coordinates Mg(2+). Lys454 is a binding site for (6S)-5-formyl-5,6,7,8-tetrahydrofolate.

Belongs to the TRAFAC class TrmE-Era-EngA-EngB-Septin-like GTPase superfamily. TrmE GTPase family. Homodimer. Heterotetramer of two MnmE and two MnmG subunits. K(+) is required as a cofactor.

The protein resides in the cytoplasm. Functionally, exhibits a very high intrinsic GTPase hydrolysis rate. Involved in the addition of a carboxymethylaminomethyl (cmnm) group at the wobble position (U34) of certain tRNAs, forming tRNA-cmnm(5)s(2)U34. In Acinetobacter baumannii (strain AYE), this protein is tRNA modification GTPase MnmE.